A 290-amino-acid polypeptide reads, in one-letter code: Diaminopimelate epimerase (290 aa).

Substrate contacts are provided by asparagine 17, glutamine 49, and asparagine 69. The active-site Proton donor is cysteine 78. Substrate is bound by residues 79-80 (GN), asparagine 166, asparagine 199, and 217-218 (ER). Cysteine 226 functions as the Proton acceptor in the catalytic mechanism. 227 to 228 (GS) serves as a coordination point for substrate.

The protein belongs to the diaminopimelate epimerase family. As to quaternary structure, homodimer.

The protein resides in the cytoplasm. It catalyses the reaction (2S,6S)-2,6-diaminopimelate = meso-2,6-diaminopimelate. The protein operates within amino-acid biosynthesis; L-lysine biosynthesis via DAP pathway; DL-2,6-diaminopimelate from LL-2,6-diaminopimelate: step 1/1. Catalyzes the stereoinversion of LL-2,6-diaminopimelate (L,L-DAP) to meso-diaminopimelate (meso-DAP), a precursor of L-lysine and an essential component of the bacterial peptidoglycan. The polypeptide is Diaminopimelate epimerase (Nitrobacter hamburgensis (strain DSM 10229 / NCIMB 13809 / X14)).